A 121-amino-acid chain; its full sequence is MDKTQSRLRRARQTRIKIAELQVARLAVHRTNTHIYAQVFSPCGTKVLASASTLEAEVRAELADKSGKGGNVNAATLIGKRIAEKAKAAGIESVAFDRSGFRYHGRVKALAEAAREAGLKF.

Belongs to the universal ribosomal protein uL18 family. As to quaternary structure, part of the 50S ribosomal subunit; part of the 5S rRNA/L5/L18/L25 subcomplex. Contacts the 5S and 23S rRNAs.

This is one of the proteins that bind and probably mediate the attachment of the 5S RNA into the large ribosomal subunit, where it forms part of the central protuberance. This is Large ribosomal subunit protein uL18 from Burkholderia ambifaria (strain MC40-6).